The chain runs to 183 residues: Transmembrane and coiled-coil domain-containing protein 2 (183 aa).

A helical transmembrane segment spans residues 54-74 (VQIILGISFLTLLAIGLFALW). A coiled-coil region spans residues 127-150 (GLQEKILKKLQMVENKVRDLEGII).

The protein localises to the membrane. The sequence is that of Transmembrane and coiled-coil domain-containing protein 2 (Tmco2) from Mus musculus (Mouse).